A 245-amino-acid polypeptide reads, in one-letter code: Haloacid dehalogenase-like hydrolase domain-containing protein At2g33255 (245 aa).

An N-acetylalanine modification is found at Thr-2. The active-site Nucleophile is the Asp-39. Positions 39, 41, and 186 each coordinate Mg(2+). The Proton donor role is filled by Asp-41.

Belongs to the HAD-like hydrolase superfamily. DOG/GPP family. Mg(2+) serves as cofactor.

The protein is Haloacid dehalogenase-like hydrolase domain-containing protein At2g33255 of Arabidopsis thaliana (Mouse-ear cress).